We begin with the raw amino-acid sequence, 456 residues long: MKTWPSRAVSLLLLALALPVGCSEPPPPVRDPDTLATIRERGELVVLTLAGPTSLIENEDGPPSGYEVDLANAFAASLGVTARFEVAASLPDLFDALAAGDGHVAAAGLTLTPERSERLAFSPVYKSVTEQLVCRRGGVNPTRLERLPDADIVVLEGSSYEETLRAIGVTHTALRWRTRPGGSAMPLLEAVDDGQADCTIADSHLADFARRRHPELIVARNLTGEQPLAWAYDARIDGLGEALSAWFATAHADGLLEALDETWFGRFGDYDYVDVARFVRRVENRLPRYRRLFEAAADELPFEWELLAAQAYQESHWDPDAVSATGVRGLMMLTLSTAERVGIDDRTDPEQSIVGGAAYLDDLYERVPDSVTGPDRLWFALAAYNVGMGHMYDARRLAERLGRDKDSWDDLAEILPLLSDPAHYSTLRYGYARGHEPVRYVAKIREYRALLAAQDL.

A signal peptide spans 1–22; that stretch reads MKTWPSRAVSLLLLALALPVGC. Positions 23-267 are non-LT domain; it reads SEPPPPVRDP…ALDETWFGRF (245 aa). Residues 268-456 form an LT domain region; the sequence is GDYDYVDVAR…YRALLAAQDL (189 aa). E314 is an active-site residue.

It in the N-terminal section; belongs to the bacterial solute-binding protein 3 family. In the C-terminal section; belongs to the transglycosylase Slt family.

It is found in the cell outer membrane. It carries out the reaction Exolytic cleavage of the (1-&gt;4)-beta-glycosidic linkage between N-acetylmuramic acid (MurNAc) and N-acetylglucosamine (GlcNAc) residues in peptidoglycan, from either the reducing or the non-reducing ends of the peptidoglycan chains, with concomitant formation of a 1,6-anhydrobond in the MurNAc residue.. Murein-degrading enzyme that degrades murein glycan strands and insoluble, high-molecular weight murein sacculi, with the concomitant formation of a 1,6-anhydromuramoyl product. Lytic transglycosylases (LTs) play an integral role in the metabolism of the peptidoglycan (PG) sacculus. Their lytic action creates space within the PG sacculus to allow for its expansion as well as for the insertion of various structures such as secretion systems and flagella. In Maricaulis maris (strain MCS10) (Caulobacter maris), this protein is Membrane-bound lytic murein transglycosylase F.